The sequence spans 358 residues: Magnesium-protoporphyrin IX monomethyl ester [oxidative] cyclase 1 (358 aa).

Belongs to the AcsF family. The cofactor is Fe cation.

The enzyme catalyses Mg-protoporphyrin IX 13-monomethyl ester + 3 NADPH + 3 O2 + 2 H(+) = 3,8-divinyl protochlorophyllide a + 3 NADP(+) + 5 H2O. The protein operates within porphyrin-containing compound metabolism; chlorophyll biosynthesis (light-independent). Its function is as follows. Catalyzes the formation of the isocyclic ring in chlorophyll biosynthesis. Mediates the cyclase reaction, which results in the formation of divinylprotochlorophyllide (Pchlide) characteristic of all chlorophylls from magnesium-protoporphyrin IX 13-monomethyl ester (MgPMME). In Synechocystis sp. (strain ATCC 27184 / PCC 6803 / Kazusa), this protein is Magnesium-protoporphyrin IX monomethyl ester [oxidative] cyclase 1.